The chain runs to 361 residues: Chorismate synthase (361 aa).

Arginine 48 and arginine 54 together coordinate NADP(+). FMN-binding positions include 125 to 127 (RSS), 238 to 239 (NA), glycine 278, 293 to 297 (KPTSS), and arginine 319.

It belongs to the chorismate synthase family. As to quaternary structure, homotetramer. The cofactor is FMNH2.

The enzyme catalyses 5-O-(1-carboxyvinyl)-3-phosphoshikimate = chorismate + phosphate. The protein operates within metabolic intermediate biosynthesis; chorismate biosynthesis; chorismate from D-erythrose 4-phosphate and phosphoenolpyruvate: step 7/7. Its function is as follows. Catalyzes the anti-1,4-elimination of the C-3 phosphate and the C-6 proR hydrogen from 5-enolpyruvylshikimate-3-phosphate (EPSP) to yield chorismate, which is the branch point compound that serves as the starting substrate for the three terminal pathways of aromatic amino acid biosynthesis. This reaction introduces a second double bond into the aromatic ring system. The polypeptide is Chorismate synthase (Salmonella dublin (strain CT_02021853)).